A 130-amino-acid polypeptide reads, in one-letter code: Glycine cleavage system H protein (130 aa).

The Lipoyl-binding domain occupies 24 to 106; that stretch reads EYTVGITEHA…YHEGWLFRIK (83 aa). Lysine 65 is subject to N6-lipoyllysine.

Belongs to the GcvH family. As to quaternary structure, the glycine cleavage system is composed of four proteins: P, T, L and H. The cofactor is (R)-lipoate.

In terms of biological role, the glycine cleavage system catalyzes the degradation of glycine. The H protein shuttles the methylamine group of glycine from the P protein to the T protein. In Photorhabdus laumondii subsp. laumondii (strain DSM 15139 / CIP 105565 / TT01) (Photorhabdus luminescens subsp. laumondii), this protein is Glycine cleavage system H protein.